We begin with the raw amino-acid sequence, 174 residues long: Recombination protein RecR (174 aa).

A C4-type zinc finger spans residues 30 to 45; it reads CNACRTFTEEEECTIC. The Toprim domain maps to 54-149; that stretch reads GQLCIVEMPE…KVTRIAHGIP (96 aa).

Belongs to the RecR family.

In terms of biological role, may play a role in DNA repair. It seems to be involved in an RecBC-independent recombinational process of DNA repair. It may act with RecF and RecO. The sequence is that of Recombination protein RecR from Haemophilus ducreyi (strain 35000HP / ATCC 700724).